Here is an 898-residue protein sequence, read N- to C-terminus: Chitin synthase 1 (898 aa).

Positions 1-154 (MDPRYGAQPM…PPQQGGGIQR (154 aa)) are disordered. Positions 9–21 (PMPPRRSPSPGHP) are enriched in pro residues. Composition is skewed to polar residues over residues 64–75 (DHLSLNAAQSVD) and 136–146 (DVPSEQYQDPP). Transmembrane regions (helical) follow at residues 441–461 (SAFG…YVAL), 540–560 (RWLN…LDFL), 570–590 (FAFF…WFAI), 616–636 (ILGV…FVLS), and 651–671 (MCWF…FISV). Residue asparagine 685 is glycosylated (N-linked (GlcNAc...) asparagine). 4 helical membrane-spanning segments follow: residues 697–717 (MLII…LIML), 726–746 (FAQY…YAFC), 825–845 (GVVL…LSSA), and 870–890 (IVLW…MWFL).

It belongs to the chitin synthase family. Class I subfamily.

The protein localises to the cell membrane. The catalysed reaction is [(1-&gt;4)-N-acetyl-beta-D-glucosaminyl](n) + UDP-N-acetyl-alpha-D-glucosamine = [(1-&gt;4)-N-acetyl-beta-D-glucosaminyl](n+1) + UDP + H(+). Polymerizes chitin, a structural polymer of the cell wall and septum, by transferring the sugar moiety of UDP-GlcNAc to the non-reducing end of the growing chitin polymer. Shows additive effects in septum formation with CHS2, CHS3A, CHS4, CHS5, CHS6 and CHS7. Regulates mycelial growth and conidiation. Involved in virulence and mediates mycotoxin deoxinivalenol (DON) biosynthesis via the regulation of the expression of TRI4, TRI5 and TRI6. In Gibberella zeae (strain ATCC MYA-4620 / CBS 123657 / FGSC 9075 / NRRL 31084 / PH-1) (Wheat head blight fungus), this protein is Chitin synthase 1.